The following is a 431-amino-acid chain: Protein PIN-LIKES 6 (431 aa).

The Lumenal portion of the chain corresponds to 1-29; the sequence is MIARILAALADSMEMPVAAGGGSVLGTIK. The chain crosses the membrane as a helical span at residues 30–50; the sequence is IAVMPIAKVFTMCFLGLLMAS. Over 51–66 the chain is Cytoplasmic; the sequence is KYVNILPPSGRKLLNG. The chain crosses the membrane as a helical span at residues 67–87; the sequence is LVFSLLLPCLIFSQLGQAVTL. At 88-93 the chain is on the lumenal side; the sequence is QKMLQW. Residues 94–114 traverse the membrane as a helical segment; it reads WFIPVNVVLGTISGSIIGFIV. At 115–128 the chain is on the cytoplasmic side; it reads ASIVRPPYPYFKFT. The helical transmembrane segment at 129–149 threads the bilayer; the sequence is IIQIGVGNIGNVPLVLLAALC. The Lumenal portion of the chain corresponds to 150–169; that stretch reads RDTSNPFGDSEKCSIDGTAY. The helical transmembrane segment at 170 to 190 threads the bilayer; the sequence is ISFGQWVGAIILYTYVYQMFA. Topologically, residues 191–268 are cytoplasmic; it reads PPPEGFDAEE…FLYEKLKLKQ (78 aa). Residues 269–289 form a helical membrane-spanning segment; the sequence is IVQPAIVASILAMILGAIPFT. Residues 290–306 are Lumenal-facing; sequence KKLIFTNGAPLFFFTDS. A helical membrane pass occupies residues 307–327; the sequence is CMILGDAMIPCILLALGGNLI. Topologically, residues 328–340 are cytoplasmic; that stretch reads NGPGSSKLGFKTT. A helical transmembrane segment spans residues 341–361; that stretch reads AAIIIGRLVLVPPVGLGIVTV. At 362-376 the chain is on the lumenal side; the sequence is ADKLGFLPADDKMFR. A helical membrane pass occupies residues 377 to 397; the sequence is FVLLLQHTMPTSVLSGAVANL. Topologically, residues 398–406 are cytoplasmic; it reads RGCGRESAA. Residues 407–427 form a helical membrane-spanning segment; sequence VLFWVHIFAIFSMAGWMVLYI. The Lumenal portion of the chain corresponds to 428–431; it reads NILF.

The protein belongs to the auxin efflux carrier (TC 2.A.69.2) family. Expressed in seedlings, rosette and cauline leaves, stems and flowers.

Its subcellular location is the endoplasmic reticulum membrane. In terms of biological role, involved in cellular auxin homeostasis by regulating auxin metabolism. Regulates intracellular auxin accumulation at the endoplasmic reticulum and thus auxin availability for nuclear auxin signaling. The polypeptide is Protein PIN-LIKES 6 (Arabidopsis thaliana (Mouse-ear cress)).